We begin with the raw amino-acid sequence, 569 residues long: uncharacterized protein (569 aa).

The first 21 residues, 1–21 (MLCVMMLLFSAIASFPVSAQA), serve as a signal peptide directing secretion. Topologically, residues 22 to 530 (KDQDAGILII…DHHRQTPLEK (509 aa)) are extracellular. The helical transmembrane segment at 531–551 (ALWILSAVVLLFVIMFVSYTF) threads the bilayer. Residues 552-569 (YLRATLKKRIFKERRSLG) lie on the Cytoplasmic side of the membrane.

It localises to the cell membrane. This is an uncharacterized protein from Bacillus subtilis (strain 168).